We begin with the raw amino-acid sequence, 201 residues long: GTP cyclohydrolase 1 (201 aa).

3 residues coordinate Zn(2+): cysteine 90, histidine 93, and cysteine 163.

It belongs to the GTP cyclohydrolase I family. Homomer.

The enzyme catalyses GTP + H2O = 7,8-dihydroneopterin 3'-triphosphate + formate + H(+). The protein operates within cofactor biosynthesis; 7,8-dihydroneopterin triphosphate biosynthesis; 7,8-dihydroneopterin triphosphate from GTP: step 1/1. In Streptomyces griseus subsp. griseus (strain JCM 4626 / CBS 651.72 / NBRC 13350 / KCC S-0626 / ISP 5235), this protein is GTP cyclohydrolase 1.